Consider the following 426-residue polypeptide: Phosphomethylpyrimidine synthase (426 aa).

Residues methionine 94, tyrosine 123, histidine 162, 184 to 186 (SRG), 225 to 228 (NGMR), and glutamate 264 contribute to the substrate site. Histidine 268 lines the Zn(2+) pocket. Tyrosine 291 contributes to the substrate binding site. A Zn(2+)-binding site is contributed by histidine 332. The [4Fe-4S] cluster site is built by cysteine 406, cysteine 409, and cysteine 413.

Belongs to the ThiC family. [4Fe-4S] cluster is required as a cofactor.

It carries out the reaction 5-amino-1-(5-phospho-beta-D-ribosyl)imidazole + S-adenosyl-L-methionine = 4-amino-2-methyl-5-(phosphooxymethyl)pyrimidine + CO + 5'-deoxyadenosine + formate + L-methionine + 3 H(+). The protein operates within cofactor biosynthesis; thiamine diphosphate biosynthesis. In terms of biological role, catalyzes the synthesis of the hydroxymethylpyrimidine phosphate (HMP-P) moiety of thiamine from aminoimidazole ribotide (AIR) in a radical S-adenosyl-L-methionine (SAM)-dependent reaction. The sequence is that of Phosphomethylpyrimidine synthase from Methanospirillum hungatei JF-1 (strain ATCC 27890 / DSM 864 / NBRC 100397 / JF-1).